A 252-amino-acid chain; its full sequence is Serine/threonine phosphatase stp (252 aa).

Residues 1–18 show a composition bias toward basic and acidic residues; that stretch reads MHAEFRTDRGRIRHHNED. The segment at 1–23 is disordered; the sequence is MHAEFRTDRGRIRHHNEDNGGVF. A PPM-type phosphatase domain is found at 2–242; that stretch reads HAEFRTDRGR…DNITVLLVER (241 aa). Asp36, Gly37, Asp194, and Asp233 together coordinate Mn(2+).

It belongs to the PP2C family. Mn(2+) is required as a cofactor.

It localises to the cytoplasm. Its subcellular location is the membrane. The catalysed reaction is O-phospho-L-seryl-[protein] + H2O = L-seryl-[protein] + phosphate. The enzyme catalyses O-phospho-L-threonyl-[protein] + H2O = L-threonyl-[protein] + phosphate. Protein phosphatase that dephosphorylates EF-Tu. The protein is Serine/threonine phosphatase stp (stp) of Listeria welshimeri serovar 6b (strain ATCC 35897 / DSM 20650 / CCUG 15529 / CIP 8149 / NCTC 11857 / SLCC 5334 / V8).